A 161-amino-acid polypeptide reads, in one-letter code: Regulator of ribonuclease activity A (161 aa).

It belongs to the RraA family. In terms of assembly, homotrimer. Binds to both RNA-binding sites in the C-terminal region of Rne and to RhlB.

The protein localises to the cytoplasm. Its function is as follows. Globally modulates RNA abundance by binding to RNase E (Rne) and regulating its endonucleolytic activity. Can modulate Rne action in a substrate-dependent manner by altering the composition of the degradosome. Modulates RNA-binding and helicase activities of the degradosome. The polypeptide is Regulator of ribonuclease activity A (Shewanella oneidensis (strain ATCC 700550 / JCM 31522 / CIP 106686 / LMG 19005 / NCIMB 14063 / MR-1)).